The sequence spans 678 residues: Protein KHNYN (678 aa).

At Ser-10 the chain carries Phosphoserine. Disordered regions lie at residues 222-251 (QGVR…ARGD) and 347-407 (LHNG…ARGG). Residues 355 to 367 (PRVPSPPPAPEPP) show a composition bias toward pro residues. Phosphoserine is present on Ser-359. A compositionally biased stretch (basic and acidic residues) spans 370–388 (CGDRGDCGDRGDVGDRGDK). The RNase NYN domain maps to 437–589 (LRHIVIDGSN…LGRNGPTLDE (153 aa)). A disordered region spans residues 595–633 (ARTQGSSKAQHPSRGFAEHGKQQQGREEEKGSGGIRKTR). Positions 610-633 (FAEHGKQQQGREEEKGSGGIRKTR) are enriched in basic and acidic residues.

Belongs to the N4BP1 family.

This is Protein KHNYN (KHNYN) from Homo sapiens (Human).